Consider the following 921-residue polypeptide: MSLLTQIFGSRNQRLLKQYQKTVREINALEPAMEQLSDAALQAKTPEFKERLAKGEDIDSILPEAFAVCREASKRVLKMRHFDVQLIGGMTLHYGKIAEMGTGEGKTLMATLPTYLNALTGKGVHVVTVNDYLAQRDAEWMGTLYGWLGLSTGVNMSQIDHDAKQIAYNSDITYGTNNEFGFDYLRDNMVYDTADRVQRDLHFAVVDEVDSILIDEARTPLIISGQAENHTELYHKINAVPPLLTLQIGEETPDGKGTVEVPGDYTKDEKAHQVLLTEAGHEKAEQILTRMGLLPEGASLYDAANITLIHHLYAALRAHTLYHKDQHYVVQNDEVVIVDEFTGRLMTGRRWSDGLHQAVEAKEGVRIQNENQTLASITFQNYFRMYSKLAGMTGTADTEAYEFQEIYGLETVVIPQNRPNQRKDRQDQVYKSSEEKYGAMLKDIQDCYERGQPVLVGTTSIENSELLSGILNKANLPHNVLNAKQHAREAEIIAQAGRPKAITIATNMAGRGTDIVLGGNVAKQVQIIEANDALSEAEKTAQAQKLGDEWQSLHDQVVAAGGLHIIGTERHESRRVDNQLRGRAGRQGDPGSSRFYLSLDDALLRIFAGDRVRAIMDRLKMPEGEPIEAGIVSRSIESAQRKVEARNFDIRKQLLEYDDVANDQRKVIYQQRNELLETQDVSELITSLRQGVFADLFRTYVPEQSMEEQWDLKALDEILRNEWQIDFSLAAVLEAEPNITDEEMLERLLQVTDAAYEAKVAIVGRESFAGFERGVMLQSVDSNWREHLAALDHLRQGIHLRGYAQKNPKQEYKREAFELFGQMLNLIKDAVVKTVMTVRIQSREEIDAAEEQLAQAHVENVHYQHADFDPDAAPEELLAPTAQAHEAASQPQVNTMPKVGRNDPCPCGSGKKYKQCHGRLA.

Residues Gln-85, 103 to 107, and Asp-514 contribute to the ATP site; that span reads GEGKT. Zn(2+) is bound by residues Cys-905, Cys-907, Cys-916, and His-917.

It belongs to the SecA family. As to quaternary structure, monomer and homodimer. Part of the essential Sec protein translocation apparatus which comprises SecA, SecYEG and auxiliary proteins SecDF-YajC and YidC. Zn(2+) serves as cofactor.

It localises to the cell inner membrane. It is found in the cytoplasm. It catalyses the reaction ATP + H2O + cellular proteinSide 1 = ADP + phosphate + cellular proteinSide 2.. Functionally, part of the Sec protein translocase complex. Interacts with the SecYEG preprotein conducting channel. Has a central role in coupling the hydrolysis of ATP to the transfer of proteins into and across the cell membrane, serving both as a receptor for the preprotein-SecB complex and as an ATP-driven molecular motor driving the stepwise translocation of polypeptide chains across the membrane. The polypeptide is Protein translocase subunit SecA (Herminiimonas arsenicoxydans).